The chain runs to 191 residues: MRLHYLLRLLSFAFLWFILRSFLVKYLNFFTLGFFFCFSSTPRNFAYLVALFMLCLSTFSAFSNLTLFSWAKYSKLSLGSNVSNSTVVESSYISVIAPFFKIGFTLLSLLSLSPSSLSESNPCQDSSDSTCKSSVLSFFASSISASKFKLSLNVFNCSSITSLRSCRIFCLSSIFLSLSCSLINSCAFFCL.

Helical transmembrane passes span 12–32, 48–68, 92–112, and 168–188; these read FAFL…FFTL, LVAL…LTLF, YISV…LLSL, and IFCL…SCAF.

Its subcellular location is the membrane. This is an uncharacterized protein from Saccharomyces cerevisiae (strain ATCC 204508 / S288c) (Baker's yeast).